The chain runs to 361 residues: Probable purine permease 5 (361 aa).

The next 9 membrane-spanning stretches (helical) occupy residues tryptophan 37–leucine 57, tryptophan 70–threonine 90, leucine 105–tyrosine 125, threonine 134–valine 154, leucine 158–leucine 178, tyrosine 193–leucine 213, valine 235–phenylalanine 255, leucine 285–leucine 305, and valine 315–leucine 335. One can recognise an EamA domain in the interval valine 75–leucine 178.

Belongs to the purine permeases (TC 2.A.7.14) family.

The protein localises to the membrane. In Arabidopsis thaliana (Mouse-ear cress), this protein is Probable purine permease 5 (PUP5).